Reading from the N-terminus, the 475-residue chain is Glutamate--tRNA ligase 2 (475 aa).

A 'HIGH' region motif is present at residues proline 9–serine 19. The 'KMSKS' region signature appears at lysine 238–arginine 242. Lysine 241 contributes to the ATP binding site.

Belongs to the class-I aminoacyl-tRNA synthetase family. Glutamate--tRNA ligase type 1 subfamily. In terms of assembly, monomer.

The protein resides in the cytoplasm. The enzyme catalyses tRNA(Glu) + L-glutamate + ATP = L-glutamyl-tRNA(Glu) + AMP + diphosphate. Catalyzes the attachment of glutamate to tRNA(Glu) in a two-step reaction: glutamate is first activated by ATP to form Glu-AMP and then transferred to the acceptor end of tRNA(Glu). The protein is Glutamate--tRNA ligase 2 of Bartonella quintana (strain Toulouse) (Rochalimaea quintana).